Here is a 258-residue protein sequence, read N- to C-terminus: Acyl-[acyl-carrier-protein]--UDP-N-acetylglucosamine O-acyltransferase (258 aa).

This sequence belongs to the transferase hexapeptide repeat family. LpxA subfamily. In terms of assembly, homotrimer.

It is found in the cytoplasm. The catalysed reaction is a (3R)-hydroxyacyl-[ACP] + UDP-N-acetyl-alpha-D-glucosamine = a UDP-3-O-[(3R)-3-hydroxyacyl]-N-acetyl-alpha-D-glucosamine + holo-[ACP]. Its pathway is glycolipid biosynthesis; lipid IV(A) biosynthesis; lipid IV(A) from (3R)-3-hydroxytetradecanoyl-[acyl-carrier-protein] and UDP-N-acetyl-alpha-D-glucosamine: step 1/6. Functionally, involved in the biosynthesis of lipid A, a phosphorylated glycolipid that anchors the lipopolysaccharide to the outer membrane of the cell. This is Acyl-[acyl-carrier-protein]--UDP-N-acetylglucosamine O-acyltransferase from Pseudomonas fluorescens (strain Pf0-1).